A 448-amino-acid chain; its full sequence is Exodeoxyribonuclease 7 large subunit (448 aa).

The protein belongs to the XseA family. Heterooligomer composed of large and small subunits.

The protein resides in the cytoplasm. It carries out the reaction Exonucleolytic cleavage in either 5'- to 3'- or 3'- to 5'-direction to yield nucleoside 5'-phosphates.. In terms of biological role, bidirectionally degrades single-stranded DNA into large acid-insoluble oligonucleotides, which are then degraded further into small acid-soluble oligonucleotides. The sequence is that of Exodeoxyribonuclease 7 large subunit from Shewanella baltica (strain OS155 / ATCC BAA-1091).